Here is a 294-residue protein sequence, read N- to C-terminus: Glycine--tRNA ligase alpha subunit (294 aa).

It belongs to the class-II aminoacyl-tRNA synthetase family. As to quaternary structure, tetramer of two alpha and two beta subunits.

Its subcellular location is the cytoplasm. The catalysed reaction is tRNA(Gly) + glycine + ATP = glycyl-tRNA(Gly) + AMP + diphosphate. This Polynucleobacter asymbioticus (strain DSM 18221 / CIP 109841 / QLW-P1DMWA-1) (Polynucleobacter necessarius subsp. asymbioticus) protein is Glycine--tRNA ligase alpha subunit.